Consider the following 179-residue polypeptide: Large ribosomal subunit protein uL6 (179 aa).

The protein belongs to the universal ribosomal protein uL6 family. In terms of assembly, part of the 50S ribosomal subunit.

This protein binds to the 23S rRNA, and is important in its secondary structure. It is located near the subunit interface in the base of the L7/L12 stalk, and near the tRNA binding site of the peptidyltransferase center. The chain is Large ribosomal subunit protein uL6 from Chlorobium chlorochromatii (strain CaD3).